We begin with the raw amino-acid sequence, 405 residues long: uncharacterized protein (405 aa).

12 consecutive transmembrane segments (helical) span residues 32-52 (MFVL…VLAG), 53-73 (WLTF…GVLL), 84-104 (IDMI…WLGW), 108-128 (PVVC…IAGI), 150-170 (AVYS…VGWL), 171-191 (GPEA…VCLS), 237-257 (WGAL…VAAG), 260-280 (VVGL…LLAG), 291-311 (IMTA…AEFG), 314-334 (GLTI…VAML), 352-372 (ISIS…GVVI), and 378-398 (AIFV…LSIP).

It belongs to the major facilitator superfamily.

The protein localises to the cell membrane. This is an uncharacterized protein from Sinorhizobium fredii (strain NBRC 101917 / NGR234).